The sequence spans 209 residues: ATP-dependent Clp protease proteolytic subunit 2 (209 aa).

Ser-107 (nucleophile) is an active-site residue. Residue His-132 is part of the active site.

This sequence belongs to the peptidase S14 family. As to quaternary structure, fourteen ClpP subunits assemble into 2 heptameric rings which stack back to back to give a disk-like structure with a central cavity, resembling the structure of eukaryotic proteasomes.

It localises to the cytoplasm. The catalysed reaction is Hydrolysis of proteins to small peptides in the presence of ATP and magnesium. alpha-casein is the usual test substrate. In the absence of ATP, only oligopeptides shorter than five residues are hydrolyzed (such as succinyl-Leu-Tyr-|-NHMec, and Leu-Tyr-Leu-|-Tyr-Trp, in which cleavage of the -Tyr-|-Leu- and -Tyr-|-Trp bonds also occurs).. Functionally, cleaves peptides in various proteins in a process that requires ATP hydrolysis. Has a chymotrypsin-like activity. Plays a major role in the degradation of misfolded proteins. The polypeptide is ATP-dependent Clp protease proteolytic subunit 2 (Corynebacterium jeikeium (strain K411)).